Here is a 688-residue protein sequence, read N- to C-terminus: Envelope glycoprotein gp70 (688 aa).

The signal sequence occupies residues 1–98 (MPNHQSGSPT…SVLGPPPVSG (98 aa)). Residues 99–624 (ESYWAYLPKP…ALNPLDWTQY (526 aa)) lie on the Extracellular side of the membrane. N-linked (GlcNAc...) asparagine; by host glycosylation is found at asparagine 127 and asparagine 143. Residues 426 to 474 (LLPVDIGDEPWFDDSAIQTFRYATDLIRAKRFVAAIILGISALIAIITS) adopt a coiled-coil conformation. A propeptide spanning residues 455–456 (KR) is cleaved from the precursor. The interval 457-477 (FVAAIILGISALIAIITSFAV) is fusion peptide. An immunosuppression region spans residues 463-481 (LGISALIAIITSFAVATTA). Residue asparagine 498 is glycosylated (N-linked (GlcNAc...) asparagine; by host). Residues 511 to 541 (LKLEARLNALEEVVLDLGQDVANLKTRMSTR) are a coiled coil. Asparagine 557 carries N-linked (GlcNAc...) asparagine; by host glycosylation. A helical membrane pass occupies residues 625–645 (FIFIGVGALLLVIVLMIFPIV). At 646 to 688 (FQCLAKSLDQVQSDLNVLLLKKKKGGNAAPAAEMVELPRVSYT) the chain is on the cytoplasmic side.

The mature envelope protein (Env) consists of a trimer of SU-TM heterodimers attached by non-covalent interactions or by a labile interchain disulfide bond. Specific enzymatic cleavages in vivo yield mature proteins. Envelope glycoproteins are synthesized as an inactive precursor that is N-glycosylated and processed likely by host cell furin or by a furin-like protease in the Golgi to yield the mature SU and TM proteins. The cleavage site between SU and TM requires the minimal sequence [KR]-X-[KR]-R.

The protein localises to the virion membrane. It is found in the host cell membrane. Its function is as follows. The surface protein (SU) attaches the virus to the host cell by binding to its receptor. This interaction triggers the refolding of the transmembrane protein (TM) and is thought to activate its fusogenic potential by unmasking its fusion peptide. Fusion occurs at the host cell plasma membrane. Functionally, the transmembrane protein (TM) acts as a class I viral fusion protein. Under the current model, the protein has at least 3 conformational states: pre-fusion native state, pre-hairpin intermediate state, and post-fusion hairpin state. During viral and target cell membrane fusion, the coiled coil regions (heptad repeats) assume a trimer-of-hairpins structure, positioning the fusion peptide in close proximity to the C-terminal region of the ectodomain. The formation of this structure appears to drive apposition and subsequent fusion of viral and target cell membranes. Membranes fusion leads to delivery of the nucleocapsid into the cytoplasm. The polypeptide is Envelope glycoprotein gp70 (env) (Mouse mammary tumor virus (strain C3H) (MMTV)).